The primary structure comprises 481 residues: UDP-glucose 6-dehydrogenase 1 (481 aa).

NAD(+) is bound by residues 8 to 13, D33, R38, 86 to 90, 127 to 128, and E162; these read GAGYVG, VNTPT, and ST. Residues 158–162, 217–224, and 257–270 each bind substrate; these read EFLAE, KLAANAFL, and RIGAKFLNASVGFG. C273 serves as the catalytic Nucleophile. 273–276 contributes to the NAD(+) binding site; that stretch reads CFQK. Residue 335–336 participates in substrate binding; it reads FK. Residue R343 participates in NAD(+) binding. S394 is modified (phosphoserine). A substrate-binding site is contributed by R448.

It belongs to the UDP-glucose/GDP-mannose dehydrogenase family.

It catalyses the reaction UDP-alpha-D-glucose + 2 NAD(+) + H2O = UDP-alpha-D-glucuronate + 2 NADH + 3 H(+). It participates in nucleotide-sugar biosynthesis; UDP-alpha-D-glucuronate biosynthesis; UDP-alpha-D-glucuronate from UDP-alpha-D-glucose: step 1/1. In terms of biological role, involved in the biosynthesis of UDP-glucuronic acid (UDP-GlcA), providing nucleotide sugars for cell-wall polymers. This Oryza sativa subsp. japonica (Rice) protein is UDP-glucose 6-dehydrogenase 1 (UGD1).